The chain runs to 87 residues: Probable Fe(2+)-trafficking protein (87 aa).

The protein belongs to the Fe(2+)-trafficking protein family. Monomer.

Functionally, could be a mediator in iron transactions between iron acquisition and iron-requiring processes, such as synthesis and/or repair of Fe-S clusters in biosynthetic enzymes. In Buchnera aphidicola subsp. Baizongia pistaciae (strain Bp), this protein is Probable Fe(2+)-trafficking protein.